We begin with the raw amino-acid sequence, 617 residues long: KIF-binding protein (617 aa).

The disordered stretch occupies residues 48 to 83 (ALLGPAPEDDDERAADDGPVDQALGAGEPRDAEGPG). Residue Ser174 is modified to Phosphoserine.

Belongs to the KIF-binding protein family. In terms of assembly, interacts with KIF1B; positively regulates KIF1B microtubule motor activity. Interacts with STMN2.

Its subcellular location is the cytoplasm. It localises to the cytoskeleton. Activator of KIF1B plus-end-directed microtubule motor activity. Required for organization of axonal microtubules, and axonal outgrowth and maintenance during peripheral and central nervous system development. The polypeptide is KIF-binding protein (Kifbp) (Rattus norvegicus (Rat)).